The sequence spans 146 residues: Hemoglobin subunit beta (146 aa).

At V1 the chain carries N-acetylvaline. The region spanning 2-146 is the Globin domain; sequence HLTGEEKAAV…VANALAHKYH (145 aa). T12 is subject to Phosphothreonine. S44 carries the post-translational modification Phosphoserine. N6-acetyllysine is present on K59. A heme b-binding site is contributed by H63. Residue K82 is modified to N6-acetyllysine. H92 is a binding site for heme b. An S-nitrosocysteine modification is found at C93. Position 144 is an N6-acetyllysine (K144).

Belongs to the globin family. Heterotetramer of two alpha chains and two beta chains. Red blood cells.

Its function is as follows. Involved in oxygen transport from the lung to the various peripheral tissues. This is Hemoglobin subunit beta (HBB) from Mustela putorius furo (European domestic ferret).